A 176-amino-acid polypeptide reads, in one-letter code: Avian agnoprotein 1a (176 aa).

Disordered regions lie at residues 1-85 (MSTP…GKLE) and 116-176 (VYAA…RPAR). Residues 75 to 85 (YDRQNRFGKLE) show a composition bias toward basic and acidic residues. A coiled-coil region spans residues 76–119 (DRQNRFGKLESEIRETKSQLETLRQELKHLQADVDDLKETVYAA). The span at 137–161 (TPTATTPEASPAAPTTESTETTGPS) shows a compositional bias: low complexity.

As to quaternary structure, interacts with VP1.

The protein localises to the virion. It is found in the host nucleus. This Budgerigar fledgling disease virus (BFPyV) protein is Avian agnoprotein 1a.